The sequence spans 517 residues: Tyrosine-protein kinase Fgr (517 aa).

A lipid anchor (N-myristoyl glycine) is attached at G2. Residues C3 and C6 are each lipidated (S-palmitoyl cysteine). Positions 17 to 33 (VGLEGDFRSQGAEERYY) are enriched in basic and acidic residues. Residues 17–46 (VGLEGDFRSQGAEERYYPDPTQGRSSSISP) form a disordered region. Phosphotyrosine is present on Y32. Phosphoserine is present on S50. Positions 65–126 (TGVTIFVALY…PSNYVAPVDS (62 aa)) constitute an SH3 domain. The SH2 domain maps to 132–229 (WYFGKISRKD…GLCYLLTAPC (98 aa)). A Phosphotyrosine modification is found at Y196. The residue at position 206 (S206) is a Phosphoserine. The 254-residue stretch at 251-504 (IALDRRLGTG…YLQSFLEDYF (254 aa)) folds into the Protein kinase domain. ATP is bound by residues 257 to 265 (LGTGCFGDV) and K279. D370 (proton acceptor) is an active-site residue. Phosphotyrosine; by autocatalysis is present on Y400. At Y511 the chain carries Phosphotyrosine; by SRC.

The protein belongs to the protein kinase superfamily. Tyr protein kinase family. SRC subfamily. Interacts with ITGB1, ITGB2, MS4A2/FCER1B and FCGR2. Interacts (via SH2 domain) with SYK (tyrosine phosphorylated). Interacts (via SH2 domain) with FLT3 (tyrosine phosphorylated). Interacts with PTK2/FAK1. Interacts (via SH2 domain) with HCLS1 (tyrosine phosphorylated by SYK). Interacts with SIRPA and PTPNS1. Interacts (not phosphorylated on tyrosine residues) with CBL; FGR tyrosine phosphorylation promotes dissociation. Interacts with CLNK. Post-translationally, ubiquitinated. Becomes ubiquitinated in response to ITGB2 signaling; this does not lead to degradation. In terms of processing, phosphorylated. Autophosphorylated on tyrosine residues. Becomes phosphorylated in response to FCGR2 engagement, cell adhesion and signaling by ITGB2. Prior phosphorylation at Tyr-511 by SRC inhibits ulterior autophosphorylation at Tyr-400. In terms of tissue distribution, detected in brain cortex (at protein level).

It is found in the cell membrane. The protein localises to the cell projection. Its subcellular location is the ruffle membrane. It localises to the cytoplasm. The protein resides in the cytosol. It is found in the cytoskeleton. The protein localises to the mitochondrion inner membrane. Its subcellular location is the mitochondrion intermembrane space. It carries out the reaction L-tyrosyl-[protein] + ATP = O-phospho-L-tyrosyl-[protein] + ADP + H(+). Its activity is regulated as follows. Activated by autophosphorylation. Prior phosphorylation at Tyr-511 by SRC inhibits ulterior autophosphorylation at Tyr-400. Activated by phorbol myristate acetate, phosphatidic acid and poly-Lys. Binding (via SH2 domain) of HCLS1 that is already phosphorylated by SYK strongly increases kinase activity. In terms of biological role, non-receptor tyrosine-protein kinase that transmits signals from cell surface receptors devoid of kinase activity and contributes to the regulation of immune responses, including neutrophil, monocyte, macrophage and mast cell functions, cytoskeleton remodeling in response to extracellular stimuli, phagocytosis, cell adhesion and migration. Promotes mast cell degranulation, release of inflammatory cytokines and IgE-mediated anaphylaxis. Acts downstream of receptors that bind the Fc region of immunoglobulins, such as MS4A2/FCER1B, FCER1G and FCGR2. Acts downstream of ITGB1 and ITGB2, and regulates actin cytoskeleton reorganization, cell spreading and adhesion. Depending on the context, activates or inhibits cellular responses. Functions as a negative regulator of ITGB2 signaling, phagocytosis and SYK activity in monocytes. Required for normal ITGB1 and ITGB2 signaling, normal cell spreading and adhesion in neutrophils and macrophages. Functions as a positive regulator of cell migration and regulates cytoskeleton reorganization via RAC1 activation. Phosphorylates SYK (in vitro) and promotes SYK-dependent activation of AKT1 and MAP kinase signaling. Phosphorylates PLD2 in antigen-stimulated mast cells, leading to PLD2 activation and the production of the signaling molecules lysophosphatidic acid and diacylglycerol. Promotes activation of PIK3R1. Phosphorylates FASLG, and thereby regulates its ubiquitination and subsequent internalization. Phosphorylates ABL1. Promotes phosphorylation of CBL, CTTN, PIK3R1, PTK2/FAK1, PTK2B/PYK2 and VAV2. Phosphorylates HCLS1 that has already been phosphorylated by SYK, but not unphosphorylated HCLS1. Together with CLNK, it acts as a negative regulator of natural killer cell-activating receptors and inhibits interferon-gamma production. The sequence is that of Tyrosine-protein kinase Fgr (Fgr) from Rattus norvegicus (Rat).